The sequence spans 125 residues: Desulfoferrodoxin (125 aa).

Residues His-49, His-69, His-75, Cys-115, and His-118 each contribute to the Fe cation site.

It belongs to the desulfoferrodoxin family. Cu(2+) serves as cofactor.

It carries out the reaction reduced [rubredoxin] + superoxide + 2 H(+) = oxidized [rubredoxin] + H2O2. Catalyzes the reduction of superoxide to hydrogen peroxide, using electrons from NADH and NADH:rubredoxin oxidoreductase (NROR) and rubredoxin (Rd) as electron transport intermediaries between NADH and Dfx. Is a key factor in the superoxide reductase dependent part of a pathway for detoxification of reactive oxygen species (ROS) in C.acetobutylicum, an obligate anaerobic bacterium. This Clostridium acetobutylicum (strain ATCC 824 / DSM 792 / JCM 1419 / IAM 19013 / LMG 5710 / NBRC 13948 / NRRL B-527 / VKM B-1787 / 2291 / W) protein is Desulfoferrodoxin (dfx).